Here is a 37-residue protein sequence, read N- to C-terminus: Large ribosomal subunit protein bL36 (37 aa).

The protein belongs to the bacterial ribosomal protein bL36 family.

The chain is Large ribosomal subunit protein bL36 from Trichodesmium erythraeum (strain IMS101).